The primary structure comprises 569 residues: Melanophilin (569 aa).

Residues 4–124 (KLDLSKLTDD…MGSLEWYYGH (121 aa)) enclose the RabBD domain. The segment at 58–112 (HLNETHCARCLQPYRLLVAPKRQCLDCHLFTCQDCSHAHPEEEGWLCDPCHLARV) adopts an FYVE-type zinc-finger fold. The interval 143 to 430 (GRLQGGGGPE…MQPGRTTDQE (288 aa)) is disordered. Composition is skewed to basic and acidic residues over residues 352–362 (ETLKRKLEEMT) and 379–390 (EEEAGLNRKTSI). Positions 404–415 (SGQTSRQETSPR) are enriched in polar residues. Positions 431–465 (LLELEDRVAVTASEVQQVESEVSNIKSKIAALQAA) form a coiled coil. Positions 490 to 569 (GRLGQTPKDP…FAKPVMTQRP (80 aa)) are disordered. Residues 526–535 (SQDKAGDSFD) are compositionally biased toward basic and acidic residues.

Binds RAB27A that has been activated by GTP-binding via its N-terminus. Binds MYO5A via its C-terminal coiled coil domain.

Its subcellular location is the melanosome. Its function is as follows. Rab effector protein involved in melanosome transport. Serves as link between melanosome-bound RAB27A and the motor protein MYO5A. The protein is Melanophilin (MLPH) of Felis catus (Cat).